The following is a 639-amino-acid chain: tRNA uridine 5-carboxymethylaminomethyl modification enzyme MnmG (639 aa).

An FAD-binding site is contributed by 13–18 (GGGHAG). 274-288 (GPRYCPSIEDKIHRF) contacts NAD(+).

It belongs to the MnmG family. Homodimer. Heterotetramer of two MnmE and two MnmG subunits. Requires FAD as cofactor.

The protein resides in the cytoplasm. NAD-binding protein involved in the addition of a carboxymethylaminomethyl (cmnm) group at the wobble position (U34) of certain tRNAs, forming tRNA-cmnm(5)s(2)U34. This chain is tRNA uridine 5-carboxymethylaminomethyl modification enzyme MnmG, found in Polynucleobacter asymbioticus (strain DSM 18221 / CIP 109841 / QLW-P1DMWA-1) (Polynucleobacter necessarius subsp. asymbioticus).